A 572-amino-acid chain; its full sequence is Mitochondrial chaperone TCM62 (572 aa).

Residues 1-16 (MLRNCLRKLGNHQTKC) constitute a mitochondrion transit peptide. At 17 to 471 (SVKTLHTPIY…KANEPNFMTK (455 aa)) the chain is on the mitochondrial matrix side. The chain crosses the membrane as a helical span at residues 472 to 488 (VGINAVLSAVILPSEVA). Residues 489 to 572 (FKNAYGYNYY…VYKKPERHKA (84 aa)) lie on the Mitochondrial intermembrane side of the membrane.

Belongs to the chaperonin (HSP60) family. As to quaternary structure, forms a high molecular mass protein complex of approximately 850 kDa.

It localises to the mitochondrion inner membrane. Its function is as follows. Chaperone. Required for the assembly of succinate dehydrogenase subunits. Ensures mitochondrial gene expression at elevated temperatures and prevents heat-aggregation of the ribosomal subunit VAR1. The sequence is that of Mitochondrial chaperone TCM62 (TCM62) from Saccharomyces cerevisiae (strain ATCC 204508 / S288c) (Baker's yeast).